A 237-amino-acid polypeptide reads, in one-letter code: Ribosomal RNA small subunit methyltransferase G (237 aa).

S-adenosyl-L-methionine-binding positions include G78, F83, 129–130 (AE), and R148. A disordered region spans residues 218–237 (KKETPNKYPRKAGMPNKRPL).

This sequence belongs to the methyltransferase superfamily. RNA methyltransferase RsmG family.

It localises to the cytoplasm. Specifically methylates the N7 position of a guanine in 16S rRNA. The polypeptide is Ribosomal RNA small subunit methyltransferase G (Streptococcus gordonii (strain Challis / ATCC 35105 / BCRC 15272 / CH1 / DL1 / V288)).